We begin with the raw amino-acid sequence, 535 residues long: Glucans biosynthesis protein D 1 (535 aa).

A signal peptide (tat-type signal) is located at residues 1 to 28; sequence MHRRDLLKQLAAGFLALAPGLTPSTASA. An insert region spans residues 275–287; it reads RTDRAGDRQSAAR.

It belongs to the OpgD/OpgG family. In terms of processing, predicted to be exported by the Tat system. The position of the signal peptide cleavage has not been experimentally proven.

The protein resides in the periplasm. It functions in the pathway glycan metabolism; osmoregulated periplasmic glucan (OPG) biosynthesis. Probably involved in the control of the structural glucose backbone of osmoregulated periplasmic glucans (OPGs). The chain is Glucans biosynthesis protein D 1 (opgD1) from Ralstonia nicotianae (strain ATCC BAA-1114 / GMI1000) (Ralstonia solanacearum).